The chain runs to 41 residues: Giant hemoglobin AI chain (41 aa).

In terms of domain architecture, Globin spans 2–41 (DCGMLQRIKVKQQWASVYSSGIAREDFGEAIWKAVFALAP).

It belongs to the globin family. Giant hemoglobin is composed of four heme-containing chains (AI to AIV), and two linker chains (AV and AVI).

This is Giant hemoglobin AI chain from Lamellibrachia sp. (Deep-sea giant tube worm).